The following is a 277-amino-acid chain: GATA transcription factor 15 (277 aa).

Positions 52–94 (AYDDHSTVTTSPSSPSSSSTGSVDCTLSLGTPSSRRAEPVAAA) are disordered. Residues 58 to 74 (TVTTSPSSPSSSSTGSV) show a composition bias toward low complexity. The segment at 154-179 (CANCGTASTPLWRNGPRGPKSLCNAC) adopts a GATA-type zinc-finger fold.

This sequence belongs to the type IV zinc-finger family. Class B subfamily.

Its function is as follows. Probable transcription factor that regulates organogenesis during transition from the vegetative to the reproductive phase. Regulates the expression of CYP78A11/PLA1, HD3A and MADS1 during reproductive development in rice. May act upstream of CYP78A11/PLA1 during panicle development. Acts independently of the photoperiodic and gibberellin signaling pathways. The protein is GATA transcription factor 15 of Oryza sativa subsp. indica (Rice).